The following is a 122-amino-acid chain: Vacuolar transporter chaperone complex subunit 1 (122 aa).

The Cytoplasmic segment spans residues 1–32 (MSTQPLLQTTPGKRIALPVRVEPKVFFANERT). The chain crosses the membrane as a helical span at residues 33 to 53 (FLSWLSFAVVLGGLSVGLLNF). The Vacuolar segment spans residues 54–59 (GDRIGK). The helical transmembrane segment at 60-80 (ISAGLFTIVAIGTMGYALGIY) threads the bilayer. Over 81-101 (HWRASAIRRRGSGPYDDRLGP) the chain is Cytoplasmic. Residues 102–122 (TILCFVLLAAIITNFVLRMLF) form a helical membrane-spanning segment.

Belongs to the VTC1 family. In terms of assembly, the VTC core complex is an integral membrane heterooligomer composed of at least the catalytic subunit vtc4 and the accessory subunits vtc1 and vtc2. vtc1 is a small membrane protein without hydrophilic domain. Vtc2 and vtc4 are related and have 2 hydrophilic domains that face the cytosol, an N-terminal SPX domain and the central core domain. The central core in vtc4 is the catalytic domain. Vtc1 interacts with GTP-bound Ras-like cdc42, which is subsequently inactivated.

The protein resides in the vacuole membrane. Its function is as follows. Accessory subunit of the vacuolar transporter chaperone (VTC) complex. The VTC complex acts as a vacuolar polyphosphate polymerase that catalyzes the synthesis of inorganic polyphosphate (polyP) via transfer of phosphate from ATP to a growing polyP chain, releasing ADP. VTC exposes its catalytic domain vtc4 to the cytosol, where the growing polyP chain winds through a tunnel-shaped pocket, integrating cytoplasmic polymer synthesis with polyP membrane translocation. The VTC complex carries 9 vacuolar transmembrane domains, which are likely to constitute the translocation channel into the organelle lumen. PolyP synthesis is tightly coupled to its transport into the vacuole lumen, in order to avoid otherwise toxic intermediates in the cytosol, and it depends on the proton gradient across the membrane, formed by V-ATPase. Vtc1 contributes only 3 transmembrane domains to the complex. The VTC complex also plays a role in vacuolar membrane fusion. Involved in the control of cell polarity. The chain is Vacuolar transporter chaperone complex subunit 1 from Schizosaccharomyces pombe (strain 972 / ATCC 24843) (Fission yeast).